Consider the following 422-residue polypeptide: GTPase Obg (422 aa).

The Obg domain occupies 1 to 158 (MFYDRAKIYV…LWLELELKVI (158 aa)). An OBG-type G domain is found at 159 to 330 (ADVGLIGFPN…VIHRVAELLA (172 aa)). Residues 165-172 (GFPNAGKS), 190-194 (FTTLV), 212-215 (DIPG), 282-285 (NKMD), and 311-313 (SAA) contribute to the GTP site. Mg(2+) is bound by residues serine 172 and threonine 192. One can recognise an OCT domain in the interval 344–422 (VMFEPEERFN…IGDWEFEWSE (79 aa)).

Belongs to the TRAFAC class OBG-HflX-like GTPase superfamily. OBG GTPase family. As to quaternary structure, monomer. The cofactor is Mg(2+).

It localises to the cytoplasm. In terms of biological role, an essential GTPase which binds GTP, GDP and possibly (p)ppGpp with moderate affinity, with high nucleotide exchange rates and a fairly low GTP hydrolysis rate. Plays a role in control of the cell cycle, stress response, ribosome biogenesis and in those bacteria that undergo differentiation, in morphogenesis control. This Desulforamulus reducens (strain ATCC BAA-1160 / DSM 100696 / MI-1) (Desulfotomaculum reducens) protein is GTPase Obg.